Consider the following 450-residue polypeptide: 3-phosphoshikimate 1-carboxyvinyltransferase (450 aa).

K28, S29, and R33 together coordinate 3-phosphoshikimate. Phosphoenolpyruvate is bound at residue K28. G100 and R128 together coordinate phosphoenolpyruvate. 3-phosphoshikimate is bound by residues S173, Q175, D326, and K353. Q175 is a binding site for phosphoenolpyruvate. Catalysis depends on D326, which acts as the Proton acceptor. The phosphoenolpyruvate site is built by R357 and R402.

It belongs to the EPSP synthase family. As to quaternary structure, monomer.

It localises to the cytoplasm. It carries out the reaction 3-phosphoshikimate + phosphoenolpyruvate = 5-O-(1-carboxyvinyl)-3-phosphoshikimate + phosphate. It participates in metabolic intermediate biosynthesis; chorismate biosynthesis; chorismate from D-erythrose 4-phosphate and phosphoenolpyruvate: step 6/7. Catalyzes the transfer of the enolpyruvyl moiety of phosphoenolpyruvate (PEP) to the 5-hydroxyl of shikimate-3-phosphate (S3P) to produce enolpyruvyl shikimate-3-phosphate and inorganic phosphate. In Brucella abortus (strain S19), this protein is 3-phosphoshikimate 1-carboxyvinyltransferase.